The following is a 97-amino-acid chain: Putative septation protein SpoVG (97 aa).

The protein belongs to the SpoVG family.

Functionally, could be involved in septation. In Anaeromyxobacter sp. (strain Fw109-5), this protein is Putative septation protein SpoVG.